We begin with the raw amino-acid sequence, 227 residues long: Cytochrome c oxidase subunit 2 (227 aa).

Residues 1–14 (MAYPMQLGLQDATS) lie on the Mitochondrial intermembrane side of the membrane. A helical membrane pass occupies residues 15–45 (PIMEELTDFHDHTLMIVFLISTLVLYIISLM). The Mitochondrial matrix portion of the chain corresponds to 46–59 (LTTKLTHTNTMDAQ). The chain crosses the membrane as a helical span at residues 60–87 (EVETVWTILPAIILIMIALPSLRILYMM). Residues 88 to 227 (DEINDPYLTV…QFESWTSSMT (140 aa)) lie on the Mitochondrial intermembrane side of the membrane. Cu cation is bound by residues H161, C196, E198, C200, H204, and M207. Mg(2+) is bound at residue E198.

This sequence belongs to the cytochrome c oxidase subunit 2 family. As to quaternary structure, component of the cytochrome c oxidase (complex IV, CIV), a multisubunit enzyme composed of 14 subunits. The complex is composed of a catalytic core of 3 subunits MT-CO1, MT-CO2 and MT-CO3, encoded in the mitochondrial DNA, and 11 supernumerary subunits COX4I, COX5A, COX5B, COX6A, COX6B, COX6C, COX7A, COX7B, COX7C, COX8 and NDUFA4, which are encoded in the nuclear genome. The complex exists as a monomer or a dimer and forms supercomplexes (SCs) in the inner mitochondrial membrane with NADH-ubiquinone oxidoreductase (complex I, CI) and ubiquinol-cytochrome c oxidoreductase (cytochrome b-c1 complex, complex III, CIII), resulting in different assemblies (supercomplex SCI(1)III(2)IV(1) and megacomplex MCI(2)III(2)IV(2)). Found in a complex with TMEM177, COA6, COX18, COX20, SCO1 and SCO2. Interacts with TMEM177 in a COX20-dependent manner. Interacts with COX20. Interacts with COX16. Requires Cu cation as cofactor.

The protein localises to the mitochondrion inner membrane. The catalysed reaction is 4 Fe(II)-[cytochrome c] + O2 + 8 H(+)(in) = 4 Fe(III)-[cytochrome c] + 2 H2O + 4 H(+)(out). Component of the cytochrome c oxidase, the last enzyme in the mitochondrial electron transport chain which drives oxidative phosphorylation. The respiratory chain contains 3 multisubunit complexes succinate dehydrogenase (complex II, CII), ubiquinol-cytochrome c oxidoreductase (cytochrome b-c1 complex, complex III, CIII) and cytochrome c oxidase (complex IV, CIV), that cooperate to transfer electrons derived from NADH and succinate to molecular oxygen, creating an electrochemical gradient over the inner membrane that drives transmembrane transport and the ATP synthase. Cytochrome c oxidase is the component of the respiratory chain that catalyzes the reduction of oxygen to water. Electrons originating from reduced cytochrome c in the intermembrane space (IMS) are transferred via the dinuclear copper A center (CU(A)) of subunit 2 and heme A of subunit 1 to the active site in subunit 1, a binuclear center (BNC) formed by heme A3 and copper B (CU(B)). The BNC reduces molecular oxygen to 2 water molecules using 4 electrons from cytochrome c in the IMS and 4 protons from the mitochondrial matrix. This is Cytochrome c oxidase subunit 2 (MT-CO2) from Cratogeomys castanops (Yellow-faced pocket gopher).